The sequence spans 63 residues: Large ribosomal subunit protein bL32 (63 aa).

Residues 1–20 (MANPKAKMSKSRRDKRRAQF) are disordered. Positions 7 to 18 (KMSKSRRDKRRA) are enriched in basic residues.

It belongs to the bacterial ribosomal protein bL32 family.

The polypeptide is Large ribosomal subunit protein bL32 (Chlorobaculum tepidum (strain ATCC 49652 / DSM 12025 / NBRC 103806 / TLS) (Chlorobium tepidum)).